A 607-amino-acid chain; its full sequence is UvrABC system protein C (607 aa).

The GIY-YIG domain maps to 16 to 94; that stretch reads GRPGVYRMFD…IKEWRPPYNI (79 aa). Positions 203–238 constitute a UVR domain; that stretch reads QQLGNELNAEMEKAAMALDFEKAAELRDQIALLRRV.

The protein belongs to the UvrC family. In terms of assembly, interacts with UvrB in an incision complex.

It localises to the cytoplasm. Its function is as follows. The UvrABC repair system catalyzes the recognition and processing of DNA lesions. UvrC both incises the 5' and 3' sides of the lesion. The N-terminal half is responsible for the 3' incision and the C-terminal half is responsible for the 5' incision. The protein is UvrABC system protein C of Pseudomonas putida (strain ATCC 700007 / DSM 6899 / JCM 31910 / BCRC 17059 / LMG 24140 / F1).